A 75-amino-acid chain; its full sequence is Putative sulfur carrier protein YrkI (75 aa).

The Cysteine persulfide intermediate role is filled by Cys14.

The protein belongs to the sulfur carrier protein TusA family.

The polypeptide is Putative sulfur carrier protein YrkI (yrkI) (Bacillus subtilis (strain 168)).